The chain runs to 294 residues: tRNA pseudouridine synthase B (294 aa).

Catalysis depends on aspartate 38, which acts as the Nucleophile.

This sequence belongs to the pseudouridine synthase TruB family. Type 1 subfamily.

It carries out the reaction uridine(55) in tRNA = pseudouridine(55) in tRNA. Responsible for synthesis of pseudouridine from uracil-55 in the psi GC loop of transfer RNAs. The sequence is that of tRNA pseudouridine synthase B from Clostridium perfringens (strain ATCC 13124 / DSM 756 / JCM 1290 / NCIMB 6125 / NCTC 8237 / Type A).